Reading from the N-terminus, the 283-residue chain is uncharacterized protein (283 aa).

In terms of domain architecture, FAD-binding FR-type spans 4–131 (RPLHAFEVVA…MGPGGAYAPD (128 aa)).

This is an uncharacterized protein from Mycobacterium bovis (strain ATCC BAA-935 / AF2122/97).